A 90-amino-acid polypeptide reads, in one-letter code: ATP synthase subunit c (90 aa).

The next 2 helical transmembrane spans lie at 4–24 (FVYS…GCGI) and 53–73 (IGLA…LILI).

Belongs to the ATPase C chain family. In terms of assembly, F-type ATPases have 2 components, F(1) - the catalytic core - and F(0) - the membrane proton channel. F(1) has five subunits: alpha(3), beta(3), gamma(1), delta(1), epsilon(1). F(0) has three main subunits: a(1), b(2) and c(10-14). The alpha and beta chains form an alternating ring which encloses part of the gamma chain. F(1) is attached to F(0) by a central stalk formed by the gamma and epsilon chains, while a peripheral stalk is formed by the delta and b chains.

Its subcellular location is the cell inner membrane. Its function is as follows. F(1)F(0) ATP synthase produces ATP from ADP in the presence of a proton or sodium gradient. F-type ATPases consist of two structural domains, F(1) containing the extramembraneous catalytic core and F(0) containing the membrane proton channel, linked together by a central stalk and a peripheral stalk. During catalysis, ATP synthesis in the catalytic domain of F(1) is coupled via a rotary mechanism of the central stalk subunits to proton translocation. Key component of the F(0) channel; it plays a direct role in translocation across the membrane. A homomeric c-ring of between 10-14 subunits forms the central stalk rotor element with the F(1) delta and epsilon subunits. The protein is ATP synthase subunit c of Syntrophobacter fumaroxidans (strain DSM 10017 / MPOB).